The chain runs to 365 residues: Chorismate synthase (365 aa).

NADP(+) contacts are provided by arginine 48 and arginine 54. FMN-binding positions include 125–127 (RAS), 237–238 (NA), glycine 277, 292–296 (KPTSS), and arginine 318.

The protein belongs to the chorismate synthase family. In terms of assembly, homotetramer. FMNH2 serves as cofactor.

It carries out the reaction 5-O-(1-carboxyvinyl)-3-phosphoshikimate = chorismate + phosphate. The protein operates within metabolic intermediate biosynthesis; chorismate biosynthesis; chorismate from D-erythrose 4-phosphate and phosphoenolpyruvate: step 7/7. Functionally, catalyzes the anti-1,4-elimination of the C-3 phosphate and the C-6 proR hydrogen from 5-enolpyruvylshikimate-3-phosphate (EPSP) to yield chorismate, which is the branch point compound that serves as the starting substrate for the three terminal pathways of aromatic amino acid biosynthesis. This reaction introduces a second double bond into the aromatic ring system. This Polaromonas sp. (strain JS666 / ATCC BAA-500) protein is Chorismate synthase.